We begin with the raw amino-acid sequence, 342 residues long: Phosphate acyltransferase (342 aa).

Belongs to the PlsX family. In terms of assembly, homodimer. Probably interacts with PlsY.

Its subcellular location is the cytoplasm. It catalyses the reaction a fatty acyl-[ACP] + phosphate = an acyl phosphate + holo-[ACP]. It participates in lipid metabolism; phospholipid metabolism. Its function is as follows. Catalyzes the reversible formation of acyl-phosphate (acyl-PO(4)) from acyl-[acyl-carrier-protein] (acyl-ACP). This enzyme utilizes acyl-ACP as fatty acyl donor, but not acyl-CoA. The polypeptide is Phosphate acyltransferase (Legionella pneumophila (strain Paris)).